The primary structure comprises 440 residues: Streptokinase (440 aa).

The N-terminal stretch at 1-26 (MKNYLSFGMFALLFALTFGTVKPVQA) is a signal peptide. The segment at 72–94 (PAQGGKTEQGLRPKSKPLATDKG) is disordered.

This protein is not a protease, but it activates plasminogen by complexing with it. As a potential virulence factor, it is thought to prevent the formation of effective fibrin barriers around the site of infection, thereby contributing to the invasiveness of the cells. The chain is Streptokinase (ska) from Streptococcus pyogenes.